The sequence spans 161 residues: Ribonuclease H (161 aa).

An RNase H type-1 domain is found at 11–152 (GPRPVVIHTD…ADQLARDGLT (142 aa)). Mg(2+) is bound by residues Asp-20, Glu-58, Asp-80, and Asp-144. The tract at residues 137–161 (HDENERADQLARDGLTENRMKSRIG) is disordered.

It belongs to the RNase H family. In terms of assembly, monomer. The cofactor is Mg(2+).

It localises to the cytoplasm. The enzyme catalyses Endonucleolytic cleavage to 5'-phosphomonoester.. Functionally, endonuclease that specifically degrades the RNA of RNA-DNA hybrids. The polypeptide is Ribonuclease H (Rhodopseudomonas palustris (strain HaA2)).